Consider the following 88-residue polypeptide: Small ribosomal subunit protein uS15c (88 aa).

The protein belongs to the universal ribosomal protein uS15 family. In terms of assembly, part of the 30S ribosomal subunit.

It localises to the plastid. It is found in the chloroplast. The sequence is that of Small ribosomal subunit protein uS15c (rps15) from Pinus koraiensis (Korean pine).